The primary structure comprises 186 residues: UPF0301 protein LHK_02881 (186 aa).

This sequence belongs to the UPF0301 (AlgH) family.

The polypeptide is UPF0301 protein LHK_02881 (Laribacter hongkongensis (strain HLHK9)).